The following is a 69-amino-acid chain: Large ribosomal subunit protein uL29 (69 aa).

The protein belongs to the universal ribosomal protein uL29 family.

This Methylobacillus flagellatus (strain ATCC 51484 / DSM 6875 / VKM B-1610 / KT) protein is Large ribosomal subunit protein uL29.